We begin with the raw amino-acid sequence, 425 residues long: Serine--tRNA ligase (425 aa).

An L-serine-binding site is contributed by 233–235; sequence TAE. 264-266 is a binding site for ATP; sequence RRE. Glutamate 287 lines the L-serine pocket. Residue 351–354 participates in ATP binding; sequence EVSS. Serine 386 lines the L-serine pocket.

Belongs to the class-II aminoacyl-tRNA synthetase family. Type-1 seryl-tRNA synthetase subfamily. As to quaternary structure, homodimer. The tRNA molecule binds across the dimer.

It localises to the cytoplasm. It carries out the reaction tRNA(Ser) + L-serine + ATP = L-seryl-tRNA(Ser) + AMP + diphosphate + H(+). The catalysed reaction is tRNA(Sec) + L-serine + ATP = L-seryl-tRNA(Sec) + AMP + diphosphate + H(+). Its pathway is aminoacyl-tRNA biosynthesis; selenocysteinyl-tRNA(Sec) biosynthesis; L-seryl-tRNA(Sec) from L-serine and tRNA(Sec): step 1/1. Functionally, catalyzes the attachment of serine to tRNA(Ser). Is also able to aminoacylate tRNA(Sec) with serine, to form the misacylated tRNA L-seryl-tRNA(Sec), which will be further converted into selenocysteinyl-tRNA(Sec). This is Serine--tRNA ligase from Thermosipho melanesiensis (strain DSM 12029 / CIP 104789 / BI429).